A 263-amino-acid polypeptide reads, in one-letter code: Endonuclease 8 (263 aa).

Pro-2 acts as the Schiff-base intermediate with DNA in catalysis. The active-site Proton donor is the Glu-3. Lys-53 acts as the Proton donor; for beta-elimination activity in catalysis. Gln-70, Arg-125, and Asn-169 together coordinate DNA. Residues 229–263 (KVFHRDGERCERCGGIIEKTTLSSRPFYWCPGCQH) form an FPG-type zinc finger. The active-site Proton donor; for delta-elimination activity is Arg-253.

This sequence belongs to the FPG family. The cofactor is Zn(2+).

The enzyme catalyses 2'-deoxyribonucleotide-(2'-deoxyribose 5'-phosphate)-2'-deoxyribonucleotide-DNA = a 3'-end 2'-deoxyribonucleotide-(2,3-dehydro-2,3-deoxyribose 5'-phosphate)-DNA + a 5'-end 5'-phospho-2'-deoxyribonucleoside-DNA + H(+). Its function is as follows. Involved in base excision repair of DNA damaged by oxidation or by mutagenic agents. Acts as a DNA glycosylase that recognizes and removes damaged bases. Has a preference for oxidized pyrimidines, such as thymine glycol, 5,6-dihydrouracil and 5,6-dihydrothymine. Has AP (apurinic/apyrimidinic) lyase activity and introduces nicks in the DNA strand. Cleaves the DNA backbone by beta-delta elimination to generate a single-strand break at the site of the removed base with both 3'- and 5'-phosphates. In Klebsiella pneumoniae subsp. pneumoniae (strain ATCC 700721 / MGH 78578), this protein is Endonuclease 8.